A 133-amino-acid polypeptide reads, in one-letter code: Ribosome-binding factor A (133 aa).

It belongs to the RbfA family. Monomer. Binds 30S ribosomal subunits, but not 50S ribosomal subunits or 70S ribosomes.

The protein resides in the cytoplasm. Functionally, one of several proteins that assist in the late maturation steps of the functional core of the 30S ribosomal subunit. Associates with free 30S ribosomal subunits (but not with 30S subunits that are part of 70S ribosomes or polysomes). Required for efficient processing of 16S rRNA. May interact with the 5'-terminal helix region of 16S rRNA. The polypeptide is Ribosome-binding factor A (Acinetobacter baumannii (strain AB307-0294)).